The following is a 262-amino-acid chain: Polyamine aminopropyltransferase (262 aa).

Residues 1 to 249 (MWITQEITPY…DIHRAAFALP (249 aa)) form the PABS domain. Asn-29 provides a ligand contact to S-methyl-5'-thioadenosine. Asp-83 serves as a coordination point for spermidine. Asp-155 serves as the catalytic Proton acceptor.

In terms of assembly, homodimer.

It localises to the cytoplasm. The enzyme catalyses S-adenosyl 3-(methylsulfanyl)propylamine + putrescine = S-methyl-5'-thioadenosine + spermidine + H(+). Its pathway is amine and polyamine biosynthesis; spermidine biosynthesis; spermidine from putrescine: step 1/1. With respect to regulation, inhibited by methylglyoxal bis(cyclopentylamidinohydrazone)(MGBCP). Functionally, involved in the cell growth and proliferation. Catalyzes the irreversible transfer of a propylamine group from the amino donor S-adenosylmethioninamine (decarboxy-AdoMet) to putrescine (1,4-diaminobutane) to yield spermidine. Spermidine cannot be used as an aminopropyl acceptor. In Helicobacter pylori (strain ATCC 700392 / 26695) (Campylobacter pylori), this protein is Polyamine aminopropyltransferase.